Reading from the N-terminus, the 379-residue chain is MSEPLDLNQLAHKIKQWGLELGFQQVGITDTDLSESEPKLQAWLDKQYHGEMDWMARHGMLRARPHELLPGTLRVISVRMNYLPANAAFASTLKNPKLGYVSRYALGRDYHKLLRNRLKKLGEMIQQHCVSLNFRPFVDSAPILERPLAEKAGLGWTGKHSLILNREAGSFFFLGELLVDIPLPVDQPVEEGCGKCVACMTICPTGAIVEPYTVDARRCISYLTIELEGAIPEELRPLMGNRIYGCDDCQLICPWNRYSQLTTEDDFSPRKPLHAPELIELFAWSEEKFLKVTEGSAIRRIGHLRWLRNIAVALGNAPWDETILAALESRKGEHPLLDEHIAWAIAQQIERRNACIVEVQLPKKQRLVRVIEKGLPRDA.

D139 serves as the catalytic Proton donor. Positions I181–T213 constitute a 4Fe-4S ferredoxin-type domain. 8 residues coordinate [4Fe-4S] cluster: C193, C196, C199, C203, C219, C246, C249, and C253.

It belongs to the QueG family. As to quaternary structure, monomer. Cob(II)alamin is required as a cofactor. [4Fe-4S] cluster serves as cofactor.

It is found in the cytoplasm. The enzyme catalyses epoxyqueuosine(34) in tRNA + AH2 = queuosine(34) in tRNA + A + H2O. It functions in the pathway tRNA modification; tRNA-queuosine biosynthesis. Catalyzes the conversion of epoxyqueuosine (oQ) to queuosine (Q), which is a hypermodified base found in the wobble positions of tRNA(Asp), tRNA(Asn), tRNA(His) and tRNA(Tyr). This chain is Epoxyqueuosine reductase, found in Shigella dysenteriae serotype 1 (strain Sd197).